Here is an 871-residue protein sequence, read N- to C-terminus: Pre-mRNA-processing factor 40 homolog B (871 aa).

2 consecutive WW domains span residues 92-125 (GPPR…KPSV) and 133-166 (LLSQ…RPKD). K148 carries the N6-acetyllysine modification. The disordered stretch occupies residues 171 to 277 (EVLVKQEAAG…RSGLSWSNRE (107 aa)). K175 participates in a covalent cross-link: Glycyl lysine isopeptide (Lys-Gly) (interchain with G-Cter in SUMO2). Residues 182 to 191 (QQQQLPQTLQ) are compositionally biased toward low complexity. The segment covering 192 to 211 (PQPPQPQPDPPPVPPGPTPV) has biased composition (pro residues). Low complexity-rich tracts occupy residues 212–221 (PTGLLEPEPG) and 245–255 (EGPSSSGQHQP). FF domains are found at residues 276–330 (REKA…YKAQ), 340–397 (RLRA…VLFF), 410–470 (RRRN…HIRA), 490–550 (QRKN…YVEE), 554–610 (RFHD…LLEK), and 625–682 (RMRR…FLQV). Positions 690–871 (HLHTKGRKHG…TLLQQLDDHQ (182 aa)) are disordered. Residues 691 to 711 (LHTKGRKHGRKGKKHHHKRSH) are compositionally biased toward basic residues. The segment covering 739–756 (SESGSEPSSSLDSVESGG) has biased composition (low complexity). A Phosphoserine modification is found at S764. A compositionally biased stretch (basic residues) spans 777 to 793 (RKAKKPKKKTKKRRHKS). Residues 803 to 824 (EEKAGKESDEKEQEQDKDRELQ) are compositionally biased toward basic and acidic residues. S832 carries the phosphoserine modification. Residue K838 forms a Glycyl lysine isopeptide (Lys-Gly) (interchain with G-Cter in SUMO2) linkage. Residue S852 is modified to Phosphoserine.

This sequence belongs to the PRPF40 family. In terms of assembly, interacts with the N-terminus of HD. Expressed in the striatum and cortex of the brain (at protein level). Highly expressed in testis, fetal kidney and fetal brain. Moderately expressed in pancreas, skeletal muscle, placenta, brain and heart. Weakly expressed in colon, ileum, ovary, prostate, spleen, kidney and fetal lung.

It is found in the nucleus speckle. Functionally, may be involved in pre-mRNA splicing. This Homo sapiens (Human) protein is Pre-mRNA-processing factor 40 homolog B (PRPF40B).